Consider the following 144-residue polypeptide: 6,7-dimethyl-8-ribityllumazine synthase (144 aa).

5-amino-6-(D-ribitylamino)uracil is bound by residues Phe-21, 56–58 (AYE), and 80–82 (AVI). 85–86 (GT) contributes to the (2S)-2-hydroxy-3-oxobutyl phosphate binding site. His-88 (proton donor) is an active-site residue. Phe-113 lines the 5-amino-6-(D-ribitylamino)uracil pocket. Arg-127 is a (2S)-2-hydroxy-3-oxobutyl phosphate binding site.

It belongs to the DMRL synthase family. In terms of assembly, forms an icosahedral capsid composed of 60 subunits, arranged as a dodecamer of pentamers.

The catalysed reaction is (2S)-2-hydroxy-3-oxobutyl phosphate + 5-amino-6-(D-ribitylamino)uracil = 6,7-dimethyl-8-(1-D-ribityl)lumazine + phosphate + 2 H2O + H(+). It participates in cofactor biosynthesis; riboflavin biosynthesis; riboflavin from 2-hydroxy-3-oxobutyl phosphate and 5-amino-6-(D-ribitylamino)uracil: step 1/2. In terms of biological role, catalyzes the formation of 6,7-dimethyl-8-ribityllumazine by condensation of 5-amino-6-(D-ribitylamino)uracil with 3,4-dihydroxy-2-butanone 4-phosphate. This is the penultimate step in the biosynthesis of riboflavin. This is 6,7-dimethyl-8-ribityllumazine synthase (ribH) from Photobacterium leiognathi.